We begin with the raw amino-acid sequence, 261 residues long: Bidirectional sugar transporter SWEET1b (261 aa).

The Extracellular portion of the chain corresponds to 1–6 (MEDLAK). Residues 7–27 (FLFGVSGNVIALFLFLSPVPT) form a helical membrane-spanning segment. A MtN3/slv 1 domain is found at 7-95 (FLFGVSGNVI…VVFLVFASTH (89 aa)). Residues 28-42 (FWRIIRRKSTEDFSG) are Cytoplasmic-facing. Residues 43-63 (VPYNMTLINCLLSAWYGLPFV) form a helical membrane-spanning segment. Topologically, residues 64–71 (SPNNILVS) are extracellular. The helical transmembrane segment at 72–92 (TINGAGAVIETAYVVVFLVFA) threads the bilayer. Over 93-101 (STHKTRLRT) the chain is Cytoplasmic. Residues 102 to 122 (LGLAAAVASVFAAVALVSLLA) traverse the membrane as a helical segment. Topologically, residues 123–129 (LHGQHRK) are extracellular. A helical transmembrane segment spans residues 130–150 (LLCGVAATVCSICMYASPLSI). Positions 133–215 (GVAATVCSIC…VLYAIYRNNK (83 aa)) constitute a MtN3/slv 2 domain. Over 151-164 (MRLVIKTKSVEYMP) the chain is Cytoplasmic. A helical membrane pass occupies residues 165 to 185 (FLMSLAVFLCGTSWFIYGLLG). Topologically, residues 186 to 189 (RDPF) are extracellular. Residues 190–210 (VTIPNGCGSFLGAVQLVLYAI) traverse the membrane as a helical segment. Topologically, residues 211 to 261 (YRNNKGAGGGSGGKQAGDDDVEMAEGRNNKVADGGAADDDSTAGGKAGTEV) are cytoplasmic. The interval 218-261 (GGGSGGKQAGDDDVEMAEGRNNKVADGGAADDDSTAGGKAGTEV) is disordered.

This sequence belongs to the SWEET sugar transporter family. As to quaternary structure, forms homodimers. As to expression, highly expressed in leaves. Expressed at very low levels in roots, stems and panicles.

The protein localises to the cell membrane. It catalyses the reaction D-glucose(out) = D-glucose(in). It carries out the reaction D-galactose(in) = D-galactose(out). In terms of biological role, mediates transport of sugars across the plasma membrane. Can transport glucose and galactose, but not fructose, mannose and sucrose. The chain is Bidirectional sugar transporter SWEET1b (SWEET1B) from Oryza sativa subsp. japonica (Rice).